The sequence spans 170 residues: UPF0161 protein At3g09310 (170 aa).

Disordered regions lie at residues 49–70 (CLSA…GEEL) and 147–170 (SGIK…QRKI). Over residues 154-170 (GDEEEEDNYDDEDQRKI) the composition is skewed to acidic residues.

Belongs to the UPF0161 family.

In Arabidopsis thaliana (Mouse-ear cress), this protein is UPF0161 protein At3g09310.